The following is a 227-amino-acid chain: Transcriptional regulatory protein CusR (227 aa).

The Response regulatory domain occupies 2-116; sequence KLLIVEDEKK…ELLARVRTLL (115 aa). 4-aspartylphosphate is present on aspartate 51. Positions 125-223 form a DNA-binding region, ompR/PhoB-type; that stretch reads ESQFQVADLM…VRGVGYMLEV (99 aa).

In terms of processing, phosphorylated by CusS.

The protein localises to the cytoplasm. In terms of biological role, member of the two-component regulatory system CusS/CusR involved in response to copper and silver. The polypeptide is Transcriptional regulatory protein CusR (cusR) (Escherichia coli O6:H1 (strain CFT073 / ATCC 700928 / UPEC)).